Consider the following 295-residue polypeptide: sn-glycerol-3-phosphate transport system permease protein UgpA (295 aa).

Residues 1-11 (MSSSRPVFRSR) are Cytoplasmic-facing. Residues 12–32 (WLPYLLVAPQLVITVIFFIWP) form a helical membrane-spanning segment. Over 33-80 (AGEALWYSLQSVDPFGFSSQFVGLENFVALFHDSYYLDAFWTTIKFSA) the chain is Periplasmic. One can recognise an ABC transmembrane type-1 domain in the interval 76–284 (IKFSALVTFS…FLVIILTVVQ (209 aa)). Residues 81 to 101 (LVTFSGLLVSLFFAALVDYVV) traverse the membrane as a helical segment. Over 102–109 (RGSRFYQT) the chain is Cytoplasmic. The helical transmembrane segment at 110–130 (LMLLPYAVAPAVAAVLWIFLF) threads the bilayer. The Periplasmic portion of the chain corresponds to 131–157 (NPGRGLITHFLGEFGYDWNHAQNSGQA). Residues 158 to 178 (MFLVVFASVWKQISYNFLFFF) form a helical membrane-spanning segment. Over 179–207 (AALQSIPRSLVEAAAIDGAGPIRRFFRLS) the chain is Cytoplasmic. The helical transmembrane segment at 208–228 (LPLIAPVSFFLLVVNLVYAFF) threads the bilayer. Over 229 to 262 (DTFPVIDAATAGGPVQATTTLIYKIYCEGFTGLD) the chain is Periplasmic. A helical membrane pass occupies residues 263-283 (LSASAAQSVVLMFLVIILTVV). Residues 284–295 (QFRYVESKVRYQ) are Cytoplasmic-facing.

The protein belongs to the binding-protein-dependent transport system permease family. UgpAE subfamily. As to quaternary structure, the complex is composed of two ATP-binding proteins (UgpC), two transmembrane proteins (UgpA and UgpE) and a solute-binding protein (UgpB).

The protein localises to the cell inner membrane. In terms of biological role, part of the ABC transporter complex UgpBAEC involved in sn-glycerol-3-phosphate (G3P) import. Probably responsible for the translocation of the substrate across the membrane. This chain is sn-glycerol-3-phosphate transport system permease protein UgpA (ugpA), found in Salmonella typhi.